The primary structure comprises 367 residues: Histidinol-phosphate aminotransferase 1 (367 aa).

Lysine 229 is subject to N6-(pyridoxal phosphate)lysine.

The protein belongs to the class-II pyridoxal-phosphate-dependent aminotransferase family. Histidinol-phosphate aminotransferase subfamily. As to quaternary structure, homodimer. Pyridoxal 5'-phosphate is required as a cofactor.

It catalyses the reaction L-histidinol phosphate + 2-oxoglutarate = 3-(imidazol-4-yl)-2-oxopropyl phosphate + L-glutamate. Its pathway is amino-acid biosynthesis; L-histidine biosynthesis; L-histidine from 5-phospho-alpha-D-ribose 1-diphosphate: step 7/9. The sequence is that of Histidinol-phosphate aminotransferase 1 from Idiomarina loihiensis (strain ATCC BAA-735 / DSM 15497 / L2-TR).